The chain runs to 154 residues: Large ribosomal subunit protein uL24 (154 aa).

The interval 97–154 (EIAARKNLPPPEVPEETSNDTKESDENVTGADKEETNEIKEEDLNDNEDKNNDGSQEA) is disordered. Residues 115–135 (NDTKESDENVTGADKEETNEI) show a composition bias toward basic and acidic residues.

Belongs to the universal ribosomal protein uL24 family. As to quaternary structure, part of the 50S ribosomal subunit.

Functionally, one of two assembly initiator proteins, it binds directly to the 5'-end of the 23S rRNA, where it nucleates assembly of the 50S subunit. Its function is as follows. Located at the polypeptide exit tunnel on the outside of the subunit. This is Large ribosomal subunit protein uL24 from Picrophilus torridus (strain ATCC 700027 / DSM 9790 / JCM 10055 / NBRC 100828 / KAW 2/3).